The sequence spans 190 residues: UPF0301 protein Pfl01_5311 (190 aa).

This sequence belongs to the UPF0301 (AlgH) family.

The protein is UPF0301 protein Pfl01_5311 of Pseudomonas fluorescens (strain Pf0-1).